Here is a 502-residue protein sequence, read N- to C-terminus: Glycerol kinase (502 aa).

Threonine 14 serves as a coordination point for ADP. 3 residues coordinate ATP: threonine 14, threonine 15, and serine 16. Threonine 14 serves as a coordination point for sn-glycerol 3-phosphate. Residue arginine 18 participates in ADP binding. The sn-glycerol 3-phosphate site is built by arginine 84, glutamate 85, tyrosine 136, and aspartate 246. Glycerol is bound by residues arginine 84, glutamate 85, tyrosine 136, aspartate 246, and glutamine 247. Threonine 268 and glycine 311 together coordinate ADP. Positions 268, 311, 315, and 412 each coordinate ATP. The ADP site is built by glycine 412 and asparagine 416.

It belongs to the FGGY kinase family. In terms of assembly, homotetramer and homodimer (in equilibrium). Heterodimer with EIIA-Glc. Binds 1 zinc ion per glycerol kinase EIIA-Glc dimer. The zinc ion is important for dimerization.

The catalysed reaction is glycerol + ATP = sn-glycerol 3-phosphate + ADP + H(+). The protein operates within polyol metabolism; glycerol degradation via glycerol kinase pathway; sn-glycerol 3-phosphate from glycerol: step 1/1. With respect to regulation, activity of this regulatory enzyme is affected by several metabolites. Allosterically and non-competitively inhibited by fructose 1,6-bisphosphate (FBP) and unphosphorylated phosphocarrier protein EIIA-Glc (III-Glc), an integral component of the bacterial phosphotransferase (PTS) system. In terms of biological role, key enzyme in the regulation of glycerol uptake and metabolism. Catalyzes the phosphorylation of glycerol to yield sn-glycerol 3-phosphate. This chain is Glycerol kinase, found in Escherichia coli O7:K1 (strain IAI39 / ExPEC).